Reading from the N-terminus, the 691-residue chain is DNA ligase (691 aa).

Residues 41–45 (DAEYD), 90–91 (SL), and Glu-130 contribute to the NAD(+) site. Residue Lys-132 is the N6-AMP-lysine intermediate of the active site. NAD(+)-binding residues include Arg-153, Glu-190, Lys-307, and Lys-331. Zn(2+)-binding residues include Cys-425, Cys-428, Cys-443, and Cys-449. The region spanning 610 to 691 (APQGVLAGKT…MHTLLEGHAR (82 aa)) is the BRCT domain.

The protein belongs to the NAD-dependent DNA ligase family. LigA subfamily. It depends on Mg(2+) as a cofactor. Mn(2+) serves as cofactor.

The catalysed reaction is NAD(+) + (deoxyribonucleotide)n-3'-hydroxyl + 5'-phospho-(deoxyribonucleotide)m = (deoxyribonucleotide)n+m + AMP + beta-nicotinamide D-nucleotide.. Its function is as follows. DNA ligase that catalyzes the formation of phosphodiester linkages between 5'-phosphoryl and 3'-hydroxyl groups in double-stranded DNA using NAD as a coenzyme and as the energy source for the reaction. It is essential for DNA replication and repair of damaged DNA. This Burkholderia mallei (strain NCTC 10247) protein is DNA ligase.